Reading from the N-terminus, the 58-residue chain is Small ribosomal subunit protein bS21 (58 aa).

Positions 36–58 are disordered; the sequence is EHYEKPSVKRKKKSEAARKRKFK. The segment covering 43 to 58 has biased composition (basic residues); that stretch reads VKRKKKSEAARKRKFK.

Belongs to the bacterial ribosomal protein bS21 family.

This chain is Small ribosomal subunit protein bS21, found in Clostridium kluyveri (strain NBRC 12016).